The primary structure comprises 73 residues: U-scoloptoxin(15)-Sm2a (73 aa).

The signal sequence occupies residues 1-20 (MKFYIVFCLFVVLLINFAAA). Intrachain disulfides connect C39–C66 and C43–C68.

This sequence belongs to the scoloptoxin-15 family. As to expression, expressed by the venom gland.

The protein localises to the secreted. Functionally, activity unknown, even that a lot of targets (Kv, Nav, Cav) have been tested and activities on insects and mice have been tested. This is U-scoloptoxin(15)-Sm2a from Scolopendra morsitans (Tanzanian blue ringleg centipede).